The following is a 494-amino-acid chain: Alpha-amylase A (494 aa).

The first 18 residues, 1–18 (MFLAKSIVCLALLAVANA), serve as a signal peptide directing secretion. At glutamine 19 the chain carries Pyrrolidone carboxylic acid. An intrachain disulfide couples cysteine 46 to cysteine 102. Ca(2+)-binding residues include asparagine 116, arginine 165, and aspartate 174. Cysteines 153 and 167 form a disulfide. Position 202 (arginine 202) interacts with chloride. Aspartate 204 (nucleophile) is an active-site residue. Histidine 208 is a Ca(2+) binding site. Glutamate 241 serves as the catalytic Proton donor. Residues asparagine 304 and arginine 343 each coordinate chloride. Intrachain disulfides connect cysteine 376–cysteine 382 and cysteine 448–cysteine 460.

The protein belongs to the glycosyl hydrolase 13 family. In terms of assembly, monomer. It depends on Ca(2+) as a cofactor. Chloride is required as a cofactor.

The enzyme catalyses Endohydrolysis of (1-&gt;4)-alpha-D-glucosidic linkages in polysaccharides containing three or more (1-&gt;4)-alpha-linked D-glucose units.. The protein is Alpha-amylase A (Amy-p) of Drosophila melanogaster (Fruit fly).